The sequence spans 567 residues: Zinc finger protein 512 (567 aa).

The tract at residues 1 to 34 (MSSRLGAVPATPGPTPFKQQRSTRIVGAKNSRTQ) is disordered. Glycyl lysine isopeptide (Lys-Gly) (interchain with G-Cter in SUMO2) cross-links involve residues K18 and K84. The tract at residues 87–148 (AASHVEGPGG…QTRRIRKEPP (62 aa)) is disordered. The span at 119-130 (KKHKLYGRKQRP) shows a compositional bias: basic residues. The segment at 197 to 220 (FTCHHCGKQLRSLAGMKYHVMANH) adopts a C2H2-type 1 zinc-finger fold. K227 is covalently cross-linked (Glycyl lysine isopeptide (Lys-Gly) (interchain with G-Cter in SUMO2)). The C2H2-type 2 zinc finger occupies 287 to 310 (LKCHHCGKPYRSKAGLAYHLRSEH). K333 participates in a covalent cross-link: Glycyl lysine isopeptide (Lys-Gly) (interchain with G-Cter in SUMO2). A C2H2-type 3; atypical zinc finger spans residues 406-430 (IQCPNQGCEAVYSSVSGLKAHLGSC). Residues 440–463 (YKCLLCQKEFVSESGVKYHINSVH) form a C2H2-type 3 zinc finger. Positions 485-494 (KQRQQEEEKR) are enriched in basic and acidic residues. The segment at 485 to 567 (KQRQQEEEKR…PKTNHKRGKK (83 aa)) is disordered. Positions 495–508 (RQQHRSRRSLRRRQ) are enriched in basic residues. Basic and acidic residues predominate over residues 523 to 544 (VGKDQRRNHEELLVATSRKEPE). Over residues 556–567 (RSPKTNHKRGKK) the composition is skewed to basic residues.

This sequence belongs to the krueppel C2H2-type zinc-finger protein family.

It is found in the nucleus. Functionally, may be involved in transcriptional regulation. The chain is Zinc finger protein 512 (ZNF512) from Bos taurus (Bovine).